The sequence spans 624 residues: tRNA uridine 5-carboxymethylaminomethyl modification enzyme MnmG (624 aa).

FAD-binding positions include 13–18 (GGGHAG), Val125, and Ser180. 273 to 287 (GPRYCPSIEDKIVRF) is a binding site for NAD(+). FAD is bound at residue Gln370.

It belongs to the MnmG family. In terms of assembly, homodimer. Heterotetramer of two MnmE and two MnmG subunits. FAD serves as cofactor.

Its subcellular location is the cytoplasm. Its function is as follows. NAD-binding protein involved in the addition of a carboxymethylaminomethyl (cmnm) group at the wobble position (U34) of certain tRNAs, forming tRNA-cmnm(5)s(2)U34. The chain is tRNA uridine 5-carboxymethylaminomethyl modification enzyme MnmG from Legionella pneumophila subsp. pneumophila (strain Philadelphia 1 / ATCC 33152 / DSM 7513).